The sequence spans 395 residues: Elongation factor Tu (395 aa).

The region spanning 10-204 (KPHVNIGTIG…AVDEYIPTPQ (195 aa)) is the tr-type G domain. A G1 region spans residues 19–26 (GHVDHGKT). A GTP-binding site is contributed by 19–26 (GHVDHGKT). T26 contributes to the Mg(2+) binding site. The segment at 60–64 (GITIS) is G2. The G3 stretch occupies residues 81–84 (DCPG). Residues 81–85 (DCPGH) and 136–139 (NKCD) contribute to the GTP site. The interval 136–139 (NKCD) is G4. Residues 174 to 176 (SAL) form a G5 region.

It belongs to the TRAFAC class translation factor GTPase superfamily. Classic translation factor GTPase family. EF-Tu/EF-1A subfamily. As to quaternary structure, monomer.

The protein localises to the cytoplasm. It carries out the reaction GTP + H2O = GDP + phosphate + H(+). In terms of biological role, GTP hydrolase that promotes the GTP-dependent binding of aminoacyl-tRNA to the A-site of ribosomes during protein biosynthesis. The protein is Elongation factor Tu of Geobacillus kaustophilus (strain HTA426).